The chain runs to 78 residues: Small ribosomal subunit protein bS16c (78 aa).

The protein belongs to the bacterial ribosomal protein bS16 family.

It localises to the plastid. The protein localises to the chloroplast. This chain is Small ribosomal subunit protein bS16c, found in Chara vulgaris (Common stonewort).